The chain runs to 389 residues: Gastricsin (389 aa).

The N-terminal stretch at Met-1 to Ala-16 is a signal peptide. A propeptide spans Lys-17–Phe-59 (activation peptide). A Peptidase A1 domain is found at Tyr-73–Ala-386. Residue Asp-91 is part of the active site. 2 disulfides stabilise this stretch: Cys-104/Cys-109 and Cys-268/Cys-272. Residue Asp-277 is part of the active site. Cys-311 and Cys-344 are disulfide-bonded.

This sequence belongs to the peptidase A1 family.

The protein localises to the secreted. The enzyme catalyses More restricted specificity than pepsin A, but shows preferential cleavage at Tyr-|-Xaa bonds. High activity on hemoglobin.. In terms of biological role, hydrolyzes a variety of proteins. The sequence is that of Gastricsin (PGC) from Suncus murinus (Asian house shrew).